Here is a 209-residue protein sequence, read N- to C-terminus: Uracil phosphoribosyltransferase (209 aa).

5-phospho-alpha-D-ribose 1-diphosphate contacts are provided by residues Arg79, Arg104, and 131-139; that span reads DPMLATGGS. Residues Ile194 and 199–201 each bind uracil; that span reads GDA. Asp200 is a binding site for 5-phospho-alpha-D-ribose 1-diphosphate.

Belongs to the UPRTase family. The cofactor is Mg(2+).

It carries out the reaction UMP + diphosphate = 5-phospho-alpha-D-ribose 1-diphosphate + uracil. It participates in pyrimidine metabolism; UMP biosynthesis via salvage pathway; UMP from uracil: step 1/1. Allosterically activated by GTP. Functionally, catalyzes the conversion of uracil and 5-phospho-alpha-D-ribose 1-diphosphate (PRPP) to UMP and diphosphate. This chain is Uracil phosphoribosyltransferase, found in Brevibacillus brevis (strain 47 / JCM 6285 / NBRC 100599).